A 496-amino-acid polypeptide reads, in one-letter code: Iroquois-class homeodomain protein irx-4 (496 aa).

Residues 141-203 constitute a DNA-binding region (homeobox; TALE-type); sequence GSTRRKNATR…NARRRLKKEN (63 aa). Positions 203–236 are disordered; sequence NKMTWPPRNKCSDEKRPYDEEEEEEEEEDSQKAT. A compositionally biased stretch (acidic residues) spans 221–231; it reads DEEEEEEEEED.

It belongs to the TALE/IRO homeobox family. In terms of tissue distribution, expressed in the neural plate in overlapping patterns with other irx members, which all share an anterior border of expression. Broadly expressed in the tailbud rhombencephalon (hindbrain). Outside the nervous system and at tailbud stages, expressed in the developing otic vesicle, branchial arches and prospective heart region.

Its subcellular location is the nucleus. In terms of biological role, acts partially redundantly with other irx members in neural patterning. Required for formation of the posterior forebrain, midbrain, hindbrain, and to a lesser extent, spinal cord. Patterns the neuroectoderm in both the anterior/posterior and dorsal/ventral axes. Does not appear to play a role in pronephros kidney development. The chain is Iroquois-class homeodomain protein irx-4 from Xenopus tropicalis (Western clawed frog).